A 364-amino-acid polypeptide reads, in one-letter code: Probable G-protein coupled receptor AH9.4 (364 aa).

Methionine 1 is a topological domain (extracellular). The chain crosses the membrane as a helical span at residues 2 to 22 (AFLQSAYLVMVFTVPIAGVIL). At 23–48 (NTYVLRKLIRVARKSVVRFETTSGLP) the chain is on the cytoplasmic side. A helical transmembrane segment spans residues 49–69 (LAAMSVGDSITLCALLMQAIF). At 70–89 (HITPKGEVPTVVLSSICKFG) the chain is on the extracellular side. Residues 90–110 (IFLIHSTSAFSVWCWFFLSVL) traverse the membrane as a helical segment. Topologically, residues 111–130 (RYIAVFHPFKYRTIWRQPRN) are cytoplasmic. Residues 131 to 151 (ALKFLAGAVGMFQIYTLIFVT) traverse the membrane as a helical segment. Residues 152–177 (YRQEEKSCGEYDVFHESAFKHVHLLD) are Extracellular-facing. The chain crosses the membrane as a helical span at residues 178–198 (IFLFYAIPSLLRITLDFLVLI). Over 199–277 (HCYSPFSVEG…KKKTAMVMRS (79 aa)) the chain is Cytoplasmic. The chain crosses the membrane as a helical span at residues 278–298 (ILISVLNLLLNLPSHIFRAWA). At 299 to 315 (SYDESSLENEIVRTLEP) the chain is on the extracellular side. The chain crosses the membrane as a helical span at residues 316–336 (IAQMMYFSQFACNAFYLATSI). The Cytoplasmic portion of the chain corresponds to 337 to 364 (YETNGSPRNTVISSSNRHVSRCISDDEA).

This sequence belongs to the G-protein coupled receptor 1 family.

It is found in the cell membrane. Its function is as follows. Not known. Putative receptor. The chain is Probable G-protein coupled receptor AH9.4 from Caenorhabditis elegans.